A 283-amino-acid chain; its full sequence is Para-Rep C7 (283 aa).

In terms of domain architecture, CRESS-DNA virus Rep endonuclease spans 3–96 (SIRATHWCFT…IAGPWEYGTW (94 aa)). The short motif at 10-13 (CFTL) is the RCR-1 element. Glutamate 36 and histidine 42 together coordinate a divalent metal cation. An RCR-2 motif is present at residues 42–44 (HLQ). The short motif at 51–71 (KHVTLKKMKELLPGAHLEMAK) is the Nuclear localization signal element. Tyrosine 79 acts as the For DNA cleavage activity in catalysis. The RCR-3 motif lies at 79–82 (YCQK). Glutamate 84 is an a divalent metal cation binding site. The short motif at 96 to 102 (WISSGSH) is the Nuclear localization signal element. Residue 178–180 (GKS) coordinates ATP.

This sequence belongs to the nanoviridea/circoviridae replication-associated protein family. As to quaternary structure, homooligomer (Potential). Rep binds to repeated DNA motifs (iterons). Requires Mg(2+) as cofactor. Mn(2+) is required as a cofactor.

It localises to the host nucleus. It catalyses the reaction ATP + H2O = ADP + phosphate + H(+). In terms of biological role, initiates and terminates the replication only of its own subviral DNA molecule. The closed circular ssDNA genome is first converted to a superhelical dsDNA. Rep binds a specific hairpin at the genome origin of replication. Introduces an endonucleolytic nick within the intergenic region of the genome, thereby initiating the rolling circle replication (RCR). Following cleavage, binds covalently to the 5'-phosphate of DNA as a tyrosyl ester. The cleavage gives rise to a free 3'-OH that serves as a primer for the cellular DNA polymerase. The polymerase synthesizes the (+) strand DNA by rolling circle mechanism. After one round of replication, a Rep-catalyzed nucleotidyl transfer reaction releases a circular single-stranded virus genome, thereby terminating the replication. Displays origin-specific DNA cleavage, nucleotidyl transferase, ATPase and helicase activities. The protein is Para-Rep C7 (C7) of Faba bean necrotic yellows C7 alphasatellite (FBNYC7A).